We begin with the raw amino-acid sequence, 696 residues long: Protein OS-9 homolog (696 aa).

The signal sequence occupies residues M1–A15. N35, N46, and N68 each carry an N-linked (GlcNAc...) asparagine glycan. The MRH domain occupies N106 to L224. An intrachain disulfide couples C108 to C121. A mannooligosaccharide derivative contacts are provided by W116, Q128, D178, R184, E206, and Y212. Intrachain disulfides connect C177–C210 and C192–C222. Residues N276, N290, and N372 are each glycosylated (N-linked (GlcNAc...) asparagine). Disordered stretches follow at residues I450 to D600 and T667 to L696. Residues T458 to S467 are compositionally biased toward polar residues. A compositionally biased stretch (basic and acidic residues) spans R482 to E498. 3 stretches are compositionally biased toward polar residues: residues E499–S518, N528–D553, and N585–D597. N588 is a glycosylation site (N-linked (GlcNAc...) asparagine). The segment covering E685–L696 has biased composition (basic and acidic residues).

The protein belongs to the OS-9 family. In terms of assembly, interacts with missfolded ER lumenal proteins.

The protein resides in the endoplasmic reticulum membrane. Its function is as follows. Lectin involved in the quality control of the secretory pathway. As a member of the endoplasmic reticulum-associated degradation lumenal (ERAD-L) surveillance system, targets misfolded endoplasmic reticulum lumenal glycoproteins for degradation. This is Protein OS-9 homolog (YOS9) from Candida glabrata (strain ATCC 2001 / BCRC 20586 / JCM 3761 / NBRC 0622 / NRRL Y-65 / CBS 138) (Yeast).